A 307-amino-acid polypeptide reads, in one-letter code: MTKTRCMHVHFRKILQRVKKTLRLSASDQQSQGVTEPLSLGDLPEECISLIISFTSPRDACVFALVSKTFESAVQSDIVWEKFIPPEYESLLSRSQHFSSKKELFFALCDESVLINVSKKDLWIEKATGKRCMMLSASALNLSTHHTWKWITNPVSAWLETVPELLTTRWFEIRCRTNTRFLSPRTRYSVYIVFLKADICYGFAYVAMEAVVRMVGHELSESCRRYVCFHEAMEWQFLTRKNLVNPERREDGWMEIEIGEFFNEGAFRNNDEIEMSVSETTQRNTKRGLIIQGIEIRPTKKPGNEMP.

The 47-residue stretch at Pro-37 to Phe-83 folds into the F-box domain.

This chain is F-box protein PP2-B7 (PP2B7), found in Arabidopsis thaliana (Mouse-ear cress).